The primary structure comprises 135 residues: ATP synthase epsilon chain (135 aa).

The protein belongs to the ATPase epsilon chain family. In terms of assembly, F-type ATPases have 2 components, CF(1) - the catalytic core - and CF(0) - the membrane proton channel. CF(1) has five subunits: alpha(3), beta(3), gamma(1), delta(1), epsilon(1). CF(0) has three main subunits: a, b and c.

It is found in the cell inner membrane. Functionally, produces ATP from ADP in the presence of a proton gradient across the membrane. The chain is ATP synthase epsilon chain from Rhodopseudomonas palustris (strain BisB5).